Consider the following 842-residue polypeptide: GPI ethanolamine phosphate transferase 2 (842 aa).

N-linked (GlcNAc...) asparagine glycosylation is present at asparagine 186. The helical transmembrane segment at tyrosine 409–tyrosine 429 threads the bilayer. Residue asparagine 441 is glycosylated (N-linked (GlcNAc...) asparagine). The next 2 helical transmembrane spans lie at threonine 442–isoleucine 462 and phenylalanine 468–serine 488. N-linked (GlcNAc...) asparagine glycosylation occurs at asparagine 506. The helical transmembrane segment at glycine 524 to leucine 544 threads the bilayer. N-linked (GlcNAc...) asparagine glycosylation is present at asparagine 551. Residues valine 554–leucine 574 form a helical membrane-spanning segment. Asparagine 578 is a glycosylation site (N-linked (GlcNAc...) asparagine). Transmembrane regions (helical) follow at residues isoleucine 615–valine 635, tyrosine 698–glycine 718, and isoleucine 740–phenylalanine 760. Asparagine 771 carries an N-linked (GlcNAc...) asparagine glycan. 2 helical membrane-spanning segments follow: residues tyrosine 783 to leucine 803 and methionine 821 to leucine 841.

Belongs to the PIGG/PIGN/PIGO family. PIGG subfamily.

It localises to the endoplasmic reticulum membrane. Its pathway is glycolipid biosynthesis; glycosylphosphatidylinositol-anchor biosynthesis. Ethanolamine phosphate transferase involved in glycosylphosphatidylinositol-anchor biosynthesis. Transfers ethanolamine phosphate to the GPI second mannose. The protein is GPI ethanolamine phosphate transferase 2 (LAS21) of Candida glabrata (strain ATCC 2001 / BCRC 20586 / JCM 3761 / NBRC 0622 / NRRL Y-65 / CBS 138) (Yeast).